Reading from the N-terminus, the 324-residue chain is Carbonic anhydrase, chloroplastic (324 aa).

It belongs to the beta-class carbonic anhydrase family. In terms of assembly, homohexamer.

It is found in the plastid. The protein localises to the chloroplast stroma. It catalyses the reaction hydrogencarbonate + H(+) = CO2 + H2O. In terms of biological role, reversible hydration of carbon dioxide. The polypeptide is Carbonic anhydrase, chloroplastic (Hordeum vulgare (Barley)).